The sequence spans 219 residues: MKKEFIMLLLLLQTIMNLNSINTNTSTSIVKELQKNLYIFNSKEYQKDKDTLNEFINSININDKEILQSLEKIKNELFIISVFFNNKKGILIALNLGAEINFKYKISPISISIINNEFEITKILIDYGISLNQIDDTGYSPIFWAIYTNNEKIFEFLKESGADLSFTLKNRKTPMQAAIETENIKLIKSLEKKKIYIDDNFKKKLKKLKNKEIVRILVK.

ANK repeat units lie at residues 104–133 (YKIS…SLNQ), 137–166 (TGYS…DLSF), and 170–199 (NRKT…YIDD).

The protein is Putative ankyrin repeat protein BB_0399 of Borreliella burgdorferi (strain ATCC 35210 / DSM 4680 / CIP 102532 / B31) (Borrelia burgdorferi).